The chain runs to 455 residues: Probable glycine dehydrogenase (decarboxylating) subunit 1 (455 aa).

The protein belongs to the GcvP family. N-terminal subunit subfamily. The glycine cleavage system is composed of four proteins: P, T, L and H. In this organism, the P 'protein' is a heterodimer of two subunits.

It carries out the reaction N(6)-[(R)-lipoyl]-L-lysyl-[glycine-cleavage complex H protein] + glycine + H(+) = N(6)-[(R)-S(8)-aminomethyldihydrolipoyl]-L-lysyl-[glycine-cleavage complex H protein] + CO2. The glycine cleavage system catalyzes the degradation of glycine. The P protein binds the alpha-amino group of glycine through its pyridoxal phosphate cofactor; CO(2) is released and the remaining methylamine moiety is then transferred to the lipoamide cofactor of the H protein. The chain is Probable glycine dehydrogenase (decarboxylating) subunit 1 from Francisella tularensis subsp. novicida (strain U112).